A 233-amino-acid chain; its full sequence is Lipoprotein-releasing system ATP-binding protein LolD (233 aa).

The ABC transporter domain maps to 7 to 233; sequence IHCEKLSKTY…QLQSESERNH (227 aa). 43–50 contributes to the ATP binding site; it reads GASGAGKS.

The protein belongs to the ABC transporter superfamily. Lipoprotein translocase (TC 3.A.1.125) family. In terms of assembly, the complex is composed of two ATP-binding proteins (LolD) and two transmembrane proteins (LolC and LolE).

The protein localises to the cell inner membrane. In terms of biological role, part of the ABC transporter complex LolCDE involved in the translocation of mature outer membrane-directed lipoproteins, from the inner membrane to the periplasmic chaperone, LolA. Responsible for the formation of the LolA-lipoprotein complex in an ATP-dependent manner. The chain is Lipoprotein-releasing system ATP-binding protein LolD from Coxiella burnetii (strain RSA 493 / Nine Mile phase I).